The chain runs to 291 residues: Homoserine kinase (291 aa).

79–89 provides a ligand contact to ATP; it reads PLARGLGSSSA.

This sequence belongs to the GHMP kinase family. Homoserine kinase subfamily.

It localises to the cytoplasm. The catalysed reaction is L-homoserine + ATP = O-phospho-L-homoserine + ADP + H(+). It participates in amino-acid biosynthesis; L-threonine biosynthesis; L-threonine from L-aspartate: step 4/5. Its function is as follows. Catalyzes the ATP-dependent phosphorylation of L-homoserine to L-homoserine phosphate. The chain is Homoserine kinase from Leuconostoc citreum (strain KM20).